The following is an 891-amino-acid chain: DNA mismatch repair protein MutS (891 aa).

An ATP-binding site is contributed by 634–641; the sequence is GPNMGGKS.

The protein belongs to the DNA mismatch repair MutS family.

Functionally, this protein is involved in the repair of mismatches in DNA. It is possible that it carries out the mismatch recognition step. This protein has a weak ATPase activity. In Burkholderia pseudomallei (strain 1106a), this protein is DNA mismatch repair protein MutS.